Reading from the N-terminus, the 157-residue chain is Urease accessory protein UreE (157 aa).

The protein belongs to the UreE family.

The protein resides in the cytoplasm. In terms of biological role, involved in urease metallocenter assembly. Binds nickel. Probably functions as a nickel donor during metallocenter assembly. The chain is Urease accessory protein UreE from Corynebacterium glutamicum (strain R).